Here is a 142-residue protein sequence, read N- to C-terminus: MRRWEHYEHTADIGVRGYGSTLEEAFEAVALGLFDVMVDVRKVEPRECREVEVEEEDLEALLYSFLEELLVLHDMEGLVFGDVRVRIEKTENGYRLKAKACGEVLDYEKHEPKEEVKAITYHDMRIEKLPDGRWMAQFVPDL.

Residues aspartate 12, aspartate 141, and leucine 142 each coordinate Ca(2+).

This sequence belongs to the archease family.

Functionally, activates the tRNA-splicing ligase complex by facilitating the enzymatic turnover of catalytic subunit RtcB. Acts by promoting the guanylylation of RtcB, a key intermediate step in tRNA ligation. Can also alter the NTP specificity of RtcB such that ATP, dGTP or ITP is used efficiently. The protein is Protein archease of Thermococcus gammatolerans (strain DSM 15229 / JCM 11827 / EJ3).